Consider the following 235-residue polypeptide: Octanoyltransferase (235 aa).

Residues G28 to L203 form the BPL/LPL catalytic domain. Substrate is bound by residues R66–H73, S133–G135, and G146–A148. The active-site Acyl-thioester intermediate is the C164. Residues A202–V235 form a disordered region.

It belongs to the LipB family.

Its subcellular location is the cytoplasm. The enzyme catalyses octanoyl-[ACP] + L-lysyl-[protein] = N(6)-octanoyl-L-lysyl-[protein] + holo-[ACP] + H(+). It functions in the pathway protein modification; protein lipoylation via endogenous pathway; protein N(6)-(lipoyl)lysine from octanoyl-[acyl-carrier-protein]: step 1/2. Functionally, catalyzes the transfer of endogenously produced octanoic acid from octanoyl-acyl-carrier-protein onto the lipoyl domains of lipoate-dependent enzymes. Lipoyl-ACP can also act as a substrate although octanoyl-ACP is likely to be the physiological substrate. The sequence is that of Octanoyltransferase from Geobacter sulfurreducens (strain ATCC 51573 / DSM 12127 / PCA).